Here is a 440-residue protein sequence, read N- to C-terminus: Adenosylhomocysteinase (440 aa).

T64, D139, and E164 together coordinate substrate. 165–167 is a binding site for NAD(+); it reads TTT. The substrate site is built by K194 and D198. NAD(+) contacts are provided by residues N199, 228-233, E251, N286, 307-309, and N352; these read GFGDVG and IGH.

This sequence belongs to the adenosylhomocysteinase family. NAD(+) is required as a cofactor.

It is found in the cytoplasm. It catalyses the reaction S-adenosyl-L-homocysteine + H2O = L-homocysteine + adenosine. It participates in amino-acid biosynthesis; L-homocysteine biosynthesis; L-homocysteine from S-adenosyl-L-homocysteine: step 1/1. Functionally, may play a key role in the regulation of the intracellular concentration of adenosylhomocysteine. The protein is Adenosylhomocysteinase of Granulibacter bethesdensis (strain ATCC BAA-1260 / CGDNIH1).